Consider the following 130-residue polypeptide: Small ribosomal subunit protein uS11c (130 aa).

The protein belongs to the universal ribosomal protein uS11 family. As to quaternary structure, part of the 30S ribosomal subunit.

It localises to the plastid. Its subcellular location is the chloroplast. This is Small ribosomal subunit protein uS11c from Bigelowiella natans (Pedinomonas minutissima).